A 191-amino-acid chain; its full sequence is Gamma-glutamylaminecyclotransferase B (191 aa).

Y7–L10 is a substrate binding site. E82 (proton acceptor) is an active-site residue. A compositionally biased stretch (polar residues) spans S155–T178. A disordered region spans residues S155–Q191.

This sequence belongs to the gamma-glutamylcyclotransferase family.

The catalysed reaction is epsilon-(gamma-L-glutamyl)-L-lysine = 5-oxo-L-proline + L-lysine. May contribute to degradation of proteins cross-linked by transglutaminases by degrading the cross-link between a lysine and a glutamic acid residue. Catalyzes the formation of 5-oxo-L-proline from L-gamma-glutamyl-L-epsilon-lysine. The protein is Gamma-glutamylaminecyclotransferase B (ggact.2) of Danio rerio (Zebrafish).